The chain runs to 420 residues: 3-isopropylmalate dehydratase large subunit (420 aa).

Cys300, Cys360, and Cys363 together coordinate [4Fe-4S] cluster.

Belongs to the aconitase/IPM isomerase family. LeuC type 2 subfamily. Heterodimer of LeuC and LeuD. [4Fe-4S] cluster serves as cofactor.

The enzyme catalyses (2R,3S)-3-isopropylmalate = (2S)-2-isopropylmalate. It functions in the pathway amino-acid biosynthesis; L-leucine biosynthesis; L-leucine from 3-methyl-2-oxobutanoate: step 2/4. Catalyzes the isomerization between 2-isopropylmalate and 3-isopropylmalate, via the formation of 2-isopropylmaleate. The chain is 3-isopropylmalate dehydratase large subunit from Clostridium kluyveri (strain ATCC 8527 / DSM 555 / NBRC 12016 / NCIMB 10680 / K1).